The chain runs to 266 residues: Vitamin B12-binding protein (266 aa).

Residues 1 to 22 form the signal peptide; it reads MAKSLFRALVALSFLAPLWLNA. The Fe/B12 periplasmic-binding domain maps to 25-266; sequence RVITLSPANT…QLCNALSQVD (242 aa). Cyanocob(III)alamin is bound by residues Y50 and 242-246; that span reads DWFER. Residues C183 and C259 are joined by a disulfide bond.

Belongs to the BtuF family. As to quaternary structure, the complex is composed of two ATP-binding proteins (BtuD), two transmembrane proteins (BtuC) and a solute-binding protein (BtuF).

Its subcellular location is the periplasm. Its function is as follows. Part of the ABC transporter complex BtuCDF involved in vitamin B12 import. Binds vitamin B12 and delivers it to the periplasmic surface of BtuC. The sequence is that of Vitamin B12-binding protein from Shigella flexneri.